A 137-amino-acid chain; its full sequence is Leaf-specific thionin (137 aa).

Residues 1-28 (MATNKSIKSVVICVLILGLVLEQVQVEA) form the signal peptide. Disulfide bonds link cysteine 31/cysteine 68, cysteine 32/cysteine 60, cysteine 40/cysteine 58, and cysteine 44/cysteine 54. Residues 75-137 (LNLLPESGEP…DGEVIQSVEA (63 aa)) constitute a propeptide, acidic domain.

It belongs to the plant thionin (TC 1.C.44) family. 4 C-C subfamily.

It is found in the secreted. Thionins are small plant proteins which are toxic to animal cells. They seem to exert their toxic effect at the level of the cell membrane. Their precise function is not known. This Hordeum vulgare (Barley) protein is Leaf-specific thionin (THI1.5).